Reading from the N-terminus, the 507-residue chain is Dihydrolipoyl dehydrogenase 2, mitochondrial (507 aa).

The N-terminal 36 residues, M1–F36, are a transit peptide targeting the mitochondrion. FAD-binding positions include E73–C82, K91, G155, and T184–S186. C82 and C87 form a disulfide bridge. Residues G221–E228, E244, V278, and G313 each bind NAD(+). Residues D354 and M360–H363 contribute to the FAD site. The active-site Proton acceptor is H486.

This sequence belongs to the class-I pyridine nucleotide-disulfide oxidoreductase family. Homodimer. Part of both the glycine cleavage system composed of four proteins: P, T, L and H and of the pyruvate dehydrogenase complex containing multiple copies of three enzymatic components: pyruvate dehydrogenase (E1), dihydrolipoamide acetyltransferase (E2) and lipoamide dehydrogenase (E3). The cofactor is FAD. Post-translationally, S-nytrosylated at unknown positions. As to expression, preferentially expressed in roots, flowers and siliques and at a lower level in stems and leaves.

The protein resides in the mitochondrion matrix. The catalysed reaction is N(6)-[(R)-dihydrolipoyl]-L-lysyl-[protein] + NAD(+) = N(6)-[(R)-lipoyl]-L-lysyl-[protein] + NADH + H(+). Its function is as follows. Lipoamide dehydrogenase is a component of the glycine decarboxylase (GDC) or glycine cleavage system as well as of the alpha-ketoacid dehydrogenase complexes. LPD1 is probably the protein most often associated with the glycine decarboxylase complex while LPD2 is probably incorporated into alpha-ketoacid dehydrogenase complexes. This is Dihydrolipoyl dehydrogenase 2, mitochondrial (LPD2) from Arabidopsis thaliana (Mouse-ear cress).